Reading from the N-terminus, the 214-residue chain is MSTVAQDSAPGGGKIQDAMEQGAPGASSAAVVPEGGHYTQTPSPAFQAVKKNINHMSAFSLGLRVAEFVLSVIAFSLMASADQNGAVYSTFTSYSFVLAVNVLVVFYTIGQIIMSVLLLVSGSTPKKIYLFITFGCDQLSAFLLMAAGAAGASVALIINRGGVTDAYGNGCIDGKITSFCSHAQASVAFTFLSFFCMVISSLLGVYSLAPYLIL.

The segment at Met-1–Glu-20 is disordered. At Met-1–Ser-57 the chain is on the cytoplasmic side. Residues Ala-58–Met-78 form a helical membrane-spanning segment. Residues Ala-79–Ala-99 lie on the Extracellular side of the membrane. Residues Val-100–Val-120 form a helical membrane-spanning segment. Over Ser-121–Gln-138 the chain is Cytoplasmic. Residues Leu-139–Asn-159 traverse the membrane as a helical segment. Residues Arg-160 to Ser-193 lie on the Extracellular side of the membrane. A helical transmembrane segment spans residues Phe-194 to Leu-214.

This sequence belongs to the Casparian strip membrane proteins (CASP) family. As to quaternary structure, homodimer and heterodimers.

Its subcellular location is the cell membrane. The polypeptide is CASP-like protein UU5 (Physcomitrium patens (Spreading-leaved earth moss)).